A 274-amino-acid polypeptide reads, in one-letter code: Dermonecrotic toxin SdSicTox-betaIIB1bii (274 aa).

His5 is an active-site residue. Mg(2+) contacts are provided by Glu25 and Asp27. Residue His41 is the Nucleophile of the active site. 2 disulfides stabilise this stretch: Cys45-Cys51 and Cys47-Cys190. Asp85 serves as a coordination point for Mg(2+).

It belongs to the arthropod phospholipase D family. Class II subfamily. The cofactor is Mg(2+). In terms of tissue distribution, expressed by the venom gland.

The protein resides in the secreted. The catalysed reaction is an N-(acyl)-sphingosylphosphocholine = an N-(acyl)-sphingosyl-1,3-cyclic phosphate + choline. It carries out the reaction an N-(acyl)-sphingosylphosphoethanolamine = an N-(acyl)-sphingosyl-1,3-cyclic phosphate + ethanolamine. It catalyses the reaction a 1-acyl-sn-glycero-3-phosphocholine = a 1-acyl-sn-glycero-2,3-cyclic phosphate + choline. The enzyme catalyses a 1-acyl-sn-glycero-3-phosphoethanolamine = a 1-acyl-sn-glycero-2,3-cyclic phosphate + ethanolamine. Functionally, dermonecrotic toxins cleave the phosphodiester linkage between the phosphate and headgroup of certain phospholipids (sphingolipid and lysolipid substrates), forming an alcohol (often choline) and a cyclic phosphate. This toxin acts on sphingomyelin (SM). It may also act on ceramide phosphoethanolamine (CPE), lysophosphatidylcholine (LPC) and lysophosphatidylethanolamine (LPE), but not on lysophosphatidylserine (LPS), and lysophosphatidylglycerol (LPG). It acts by transphosphatidylation, releasing exclusively cyclic phosphate products as second products. Induces dermonecrosis, hemolysis, increased vascular permeability, edema, inflammatory response, and platelet aggregation. This Sicarius cf. damarensis (strain GJB-2008) (Six-eyed sand spider) protein is Dermonecrotic toxin SdSicTox-betaIIB1bii.